An 85-amino-acid polypeptide reads, in one-letter code: Large ribosomal subunit protein bL27 (85 aa).

Residues 1–21 (MAHKKAGGSTRNGRDSNAQRL) form a disordered region. The span at 9-19 (STRNGRDSNAQ) shows a compositional bias: polar residues.

This sequence belongs to the bacterial ribosomal protein bL27 family.

The protein is Large ribosomal subunit protein bL27 of Pectobacterium atrosepticum (strain SCRI 1043 / ATCC BAA-672) (Erwinia carotovora subsp. atroseptica).